A 1895-amino-acid polypeptide reads, in one-letter code: Probable WRKY transcription factor 19 (1895 aa).

The segment at 1 to 85 (MSEKEELPLT…SGSGLSQQLN (85 aa)) is disordered. The span at 10–22 (TLTSIGAATATSD) shows a compositional bias: polar residues. The segment covering 28 to 39 (GSSGEGISSSSS) has biased composition (low complexity). Residues 46–62 (MQNSPTGLMISQSSSMC) are compositionally biased toward polar residues. Positions 75 to 85 (SSGSGLSQQLN) are enriched in low complexity. Residues 291-371 (RPLTIDGGGN…LGFNTYLSKE (81 aa)) form the PAH domain. Residues 408 to 417 (ANMQPQTEYP) show a composition bias toward polar residues. 3 disordered regions span residues 408 to 442 (ANMQ…SSLL), 517 to 538 (YKDR…TYLS), and 580 to 620 (EASD…ADAS). Over residues 418–427 (SSSAVQSFSS) the composition is skewed to low complexity. A compositionally biased stretch (polar residues) spans 428–442 (GQPQIPTSAPDSSLL). The WRKY 1 DNA-binding region spans 462 to 526 (NVDKQVNDGY…YKDRHNHEPP (65 aa)). The segment at residues 635-700 (SEVDNLDDGY…SLCRRGISVY (66 aa)) is a DNA-binding region (WRKY 2). In terms of domain architecture, TIR spans 666–808 (KDYDVVIRYG…EIVRDALKVL (143 aa)). Residues 800-1087 (IVRDALKVLC…LDGCGFSAHV (288 aa)) enclose the NB-ARC domain. 844–851 (GTVGIGKT) contacts ATP. LRR repeat units follow at residues 1206–1227 (KLRL…FNPE), 1228–1249 (NLVE…KKAR), 1259–1281 (KLKK…SSAT), 1282–1304 (NLEH…ISYL), 1306–1328 (KLVF…VDLE), 1329–1351 (SLEV…SPNV), 1352–1371 (KELY…IKNL), 1373–1395 (LLEK…IYKL), 1397–1419 (HLET…SRRM), and 1421–1442 (CLRF…ISYL). The tract at residues 1562–1583 (ETVAPPSSSSEAREEEVETEET) is disordered. The Protein kinase domain maps to 1626 to 1877 (WQKGQLLGRG…AAELLNHPFV (252 aa)). ATP contacts are provided by residues 1632 to 1640 (LGRGSLGSV) and lysine 1654. Aspartate 1758 is a catalytic residue.

Belongs to the disease resistance X-TIR-NB-LRR-X family.

It is found in the nucleus. Functionally, transcription factor. Interacts specifically with the W box (5'-(T)TGAC[CT]-3'), a frequently occurring elicitor-responsive cis-acting element. May act also as a disease resistance protein with a serine/threonine-protein kinase activity. The sequence is that of Probable WRKY transcription factor 19 (WRKY19) from Arabidopsis thaliana (Mouse-ear cress).